The sequence spans 238 residues: Ditrans,polycis-undecaprenyl-diphosphate synthase ((2E,6E)-farnesyl-diphosphate specific) (238 aa).

Residue Asp-14 is part of the active site. Asp-14 contributes to the Mg(2+) binding site. Substrate-binding positions include 15 to 18 (GNGR), Trp-19, Arg-27, His-31, and 59 to 61 (SSE). The active-site Proton acceptor is Asn-62. Substrate-binding positions include Trp-63, Arg-65, Arg-182, and 188–190 (RIS). Residue Glu-201 participates in Mg(2+) binding.

This sequence belongs to the UPP synthase family. Homodimer. Mg(2+) serves as cofactor.

It carries out the reaction 8 isopentenyl diphosphate + (2E,6E)-farnesyl diphosphate = di-trans,octa-cis-undecaprenyl diphosphate + 8 diphosphate. Its function is as follows. Catalyzes the sequential condensation of isopentenyl diphosphate (IPP) with (2E,6E)-farnesyl diphosphate (E,E-FPP) to yield (2Z,6Z,10Z,14Z,18Z,22Z,26Z,30Z,34E,38E)-undecaprenyl diphosphate (di-trans,octa-cis-UPP). UPP is the precursor of glycosyl carrier lipid in the biosynthesis of bacterial cell wall polysaccharide components such as peptidoglycan and lipopolysaccharide. This Legionella pneumophila subsp. pneumophila (strain Philadelphia 1 / ATCC 33152 / DSM 7513) protein is Ditrans,polycis-undecaprenyl-diphosphate synthase ((2E,6E)-farnesyl-diphosphate specific).